The chain runs to 591 residues: uncharacterized protein (591 aa).

Residues 1-10 are compositionally biased toward gly residues; the sequence is MSIRGVGGNG. 4 disordered regions span residues 1 to 37, 110 to 135, 324 to 344, and 487 to 517; these read MSIR…KVED, RSSA…GYRE, EESG…AQGP, and GHYQ…TPPL. A compositionally biased stretch (polar residues) spans 11 to 32; that stretch reads NSRIPSHNGDGSNRRSQNTKGN. Residues 110–132 are compositionally biased toward low complexity; sequence RSSATRAAESGSSSRTARGASSG. Basic and acidic residues predominate over residues 490–507; the sequence is QDPRASDYDLPRASDYDL.

To C.muridarum TC_0268.

This is an uncharacterized protein from Chlamydia trachomatis serovar D (strain ATCC VR-885 / DSM 19411 / UW-3/Cx).